The sequence spans 353 residues: Photosystem II protein D1 (353 aa).

Residue Thr-2 is modified to N-acetylthreonine. Thr-2 bears the Phosphothreonine mark. Helical transmembrane passes span 29–46, 118–133, and 142–156; these read YIGW…TATS, HFLL…EWEL, and WIAV…AATA. His-118 provides a ligand contact to chlorophyll a. Pheophytin a is bound at residue Tyr-126. The [CaMn4O5] cluster site is built by Asp-170 and Glu-189. A helical transmembrane segment spans residues 197–218; it reads FHMLGVAGVFGGSLFSAMHGSL. Chlorophyll a is bound at residue His-198. Residues His-215 and 264–265 each bind a quinone; that span reads SF. His-215 is a binding site for Fe cation. His-272 serves as a coordination point for Fe cation. Residues 274-288 form a helical membrane-spanning segment; sequence FLAAWPVVGIWFTAL. [CaMn4O5] cluster contacts are provided by His-332, Glu-333, Asp-342, and Ala-344. The propeptide occupies 345–353; it reads AVESPSING.

The protein belongs to the reaction center PufL/M/PsbA/D family. PSII is composed of 1 copy each of membrane proteins PsbA, PsbB, PsbC, PsbD, PsbE, PsbF, PsbH, PsbI, PsbJ, PsbK, PsbL, PsbM, PsbT, PsbX, PsbY, PsbZ, Psb30/Ycf12, at least 3 peripheral proteins of the oxygen-evolving complex and a large number of cofactors. It forms dimeric complexes. It depends on The D1/D2 heterodimer binds P680, chlorophylls that are the primary electron donor of PSII, and subsequent electron acceptors. It shares a non-heme iron and each subunit binds pheophytin, quinone, additional chlorophylls, carotenoids and lipids. D1 provides most of the ligands for the Mn4-Ca-O5 cluster of the oxygen-evolving complex (OEC). There is also a Cl(-1) ion associated with D1 and D2, which is required for oxygen evolution. The PSII complex binds additional chlorophylls, carotenoids and specific lipids. as a cofactor. Post-translationally, tyr-161 forms a radical intermediate that is referred to as redox-active TyrZ, YZ or Y-Z. C-terminally processed by CTPA; processing is essential to allow assembly of the oxygen-evolving complex and thus photosynthetic growth.

It localises to the plastid. The protein resides in the chloroplast thylakoid membrane. It carries out the reaction 2 a plastoquinone + 4 hnu + 2 H2O = 2 a plastoquinol + O2. Functionally, photosystem II (PSII) is a light-driven water:plastoquinone oxidoreductase that uses light energy to abstract electrons from H(2)O, generating O(2) and a proton gradient subsequently used for ATP formation. It consists of a core antenna complex that captures photons, and an electron transfer chain that converts photonic excitation into a charge separation. The D1/D2 (PsbA/PsbD) reaction center heterodimer binds P680, the primary electron donor of PSII as well as several subsequent electron acceptors. The sequence is that of Photosystem II protein D1 from Sinapis alba (White mustard).